We begin with the raw amino-acid sequence, 704 residues long: UvrABC system protein C (704 aa).

Positions 1–77 (MIHDPAEPPA…PAQAGAGPMA (77 aa)) are disordered. The span at 49–66 (VEEDDEARLPEVEDEPEA) shows a compositional bias: acidic residues. Residues 67–77 (EPAQAGAGPMA) show a composition bias toward low complexity. The GIY-YIG domain maps to 92–170 (TSPGVYRMLN…IKQLRPRFNV (79 aa)). Residues 280-315 (RAVKELLAAEMEKASGELEFETAALYRDRLAALSAI) form the UVR domain.

The protein belongs to the UvrC family. In terms of assembly, interacts with UvrB in an incision complex.

It localises to the cytoplasm. Its function is as follows. The UvrABC repair system catalyzes the recognition and processing of DNA lesions. UvrC both incises the 5' and 3' sides of the lesion. The N-terminal half is responsible for the 3' incision and the C-terminal half is responsible for the 5' incision. The protein is UvrABC system protein C of Rhodopseudomonas palustris (strain ATCC BAA-98 / CGA009).